A 274-amino-acid chain; its full sequence is MTNYTGYLQLSTEKKRGKTIAQDMYFYGAFKLMNPFYLNNDEQACFYIMNPGGGYVDGDTYRMDIHLAKEAQLLLTTQSASKIYKTPKNPVVQEINITLKEGSLLEYLPDPIIGYKNSRYKQKTIVHMEKGTSLIATDIITSGWDPKGNLFSYHMLDLNTKVYLEDNLILLDHIRLTPGSQSLSSIGQFEEYSHLGTMIVVSEYTDESLISMLYDVMETQNLKCRYGLSMLSKPGFMLRVLASSTQEVMRAFDICHKLIRMKWYKRSPVFLGKY.

The protein belongs to the UreD family. As to quaternary structure, ureD, UreF and UreG form a complex that acts as a GTP-hydrolysis-dependent molecular chaperone, activating the urease apoprotein by helping to assemble the nickel containing metallocenter of UreC. The UreE protein probably delivers the nickel.

Its subcellular location is the cytoplasm. Its function is as follows. Required for maturation of urease via the functional incorporation of the urease nickel metallocenter. This chain is Urease accessory protein UreD, found in Lachnoclostridium phytofermentans (strain ATCC 700394 / DSM 18823 / ISDg) (Clostridium phytofermentans).